Reading from the N-terminus, the 352-residue chain is Ribosomal RNA large subunit methyltransferase M (352 aa).

Residues Ser-184, 217–220 (APGG), Asp-236, Asp-256, and Asp-272 each bind S-adenosyl-L-methionine. Lys-301 functions as the Proton acceptor in the catalytic mechanism.

Belongs to the class I-like SAM-binding methyltransferase superfamily. RNA methyltransferase RlmE family. RlmM subfamily. As to quaternary structure, monomer.

It is found in the cytoplasm. It carries out the reaction cytidine(2498) in 23S rRNA + S-adenosyl-L-methionine = 2'-O-methylcytidine(2498) in 23S rRNA + S-adenosyl-L-homocysteine + H(+). In terms of biological role, catalyzes the 2'-O-methylation at nucleotide C2498 in 23S rRNA. The polypeptide is Ribosomal RNA large subunit methyltransferase M (Pseudomonas aeruginosa (strain UCBPP-PA14)).